Reading from the N-terminus, the 249-residue chain is Dihydroneopterin 2',3'-cyclic phosphate phosphodiesterase (249 aa).

Residues 58–172 enclose the HD domain; sequence LIEHTISVTK…VHYADEADSK (115 aa).

Homododecamer. It depends on Fe(2+) as a cofactor. Requires Zn(2+) as cofactor.

The enzyme catalyses 7,8-dihydroneopterin 2',3'-cyclic phosphate + H2O = 7,8-dihydroneopterin 3'-phosphate + H(+). The catalysed reaction is 7,8-dihydroneopterin 2',3'-cyclic phosphate + H2O = 7,8-dihydroneopterin 2'-phosphate + H(+). It functions in the pathway cofactor biosynthesis; 5,6,7,8-tetrahydromethanopterin biosynthesis. Cyclic phosphodiesterase that hydrolyzes the cyclic phosphate of 7,8-dihydroneopterin 2',3'-cyclic phosphate (H2N-cP) and converts it to a mixture of 7,8-dihydroneopterin 2'-phosphate (H2N-2'P) and 7,8-dihydroneopterin 3'-phosphate (H2N-3'P). Is also able to utilize other phosphodiesters as substrates in vitro: hydrolysis of bis-pNPP and pNPPC produces nitrophenyl phosphate, and that of 2',3'-cAMP produces 3'-AMP. ATP, 3',5'-cAMP, GTP, 3',5'-cGMP, and 4',5'-cFMN cannot serve as substrates. This chain is Dihydroneopterin 2',3'-cyclic phosphate phosphodiesterase (mptB), found in Methanocaldococcus jannaschii (strain ATCC 43067 / DSM 2661 / JAL-1 / JCM 10045 / NBRC 100440) (Methanococcus jannaschii).